A 212-amino-acid chain; its full sequence is Ribonuclease HII (212 aa).

The RNase H type-2 domain occupies Arg-17–Ser-211. The a divalent metal cation site is built by Asp-23, Glu-24, and Asp-120.

Belongs to the RNase HII family. It depends on Mn(2+) as a cofactor. Mg(2+) serves as cofactor.

It localises to the cytoplasm. The catalysed reaction is Endonucleolytic cleavage to 5'-phosphomonoester.. Functionally, endonuclease that specifically degrades the RNA of RNA-DNA hybrids. This is Ribonuclease HII from Chloroflexus aggregans (strain MD-66 / DSM 9485).